A 286-amino-acid chain; its full sequence is Pantothenate synthetase (286 aa).

30–37 contacts ATP; it reads MGALHEGH. The active-site Proton donor is the His-37. Residue Gln-61 participates in (R)-pantoate binding. Gln-61 is a binding site for beta-alanine. 147 to 150 is an ATP binding site; sequence GEKD. A (R)-pantoate-binding site is contributed by Gln-153. ATP contacts are provided by residues Leu-176 and 184 to 187; that span reads HSSR.

It belongs to the pantothenate synthetase family. Homodimer.

The protein resides in the cytoplasm. The enzyme catalyses (R)-pantoate + beta-alanine + ATP = (R)-pantothenate + AMP + diphosphate + H(+). It functions in the pathway cofactor biosynthesis; (R)-pantothenate biosynthesis; (R)-pantothenate from (R)-pantoate and beta-alanine: step 1/1. Its function is as follows. Catalyzes the condensation of pantoate with beta-alanine in an ATP-dependent reaction via a pantoyl-adenylate intermediate. The polypeptide is Pantothenate synthetase (Bartonella tribocorum (strain CIP 105476 / IBS 506)).